The following is a 458-amino-acid chain: ATP synthase subunit beta (458 aa).

Residue 148-155 (GGAGVGKT) participates in ATP binding.

This sequence belongs to the ATPase alpha/beta chains family. As to quaternary structure, F-type ATPases have 2 components, CF(1) - the catalytic core - and CF(0) - the membrane proton channel. CF(1) has five subunits: alpha(3), beta(3), gamma(1), delta(1), epsilon(1). CF(0) has three main subunits: a(1), b(2) and c(9-12). The alpha and beta chains form an alternating ring which encloses part of the gamma chain. CF(1) is attached to CF(0) by a central stalk formed by the gamma and epsilon chains, while a peripheral stalk is formed by the delta and b chains.

The protein resides in the cell inner membrane. It carries out the reaction ATP + H2O + 4 H(+)(in) = ADP + phosphate + 5 H(+)(out). Its function is as follows. Produces ATP from ADP in the presence of a proton gradient across the membrane. The catalytic sites are hosted primarily by the beta subunits. The protein is ATP synthase subunit beta of Francisella tularensis subsp. holarctica (strain FTNF002-00 / FTA).